The following is a 707-amino-acid chain: Elongation factor G (707 aa).

Positions Gln8–Ala288 constitute a tr-type G domain. GTP is bound by residues Ala17–Thr24, Asp85–His89, and Asn139–Asp142. A disordered region spans residues Ala288 to Lys308.

It belongs to the TRAFAC class translation factor GTPase superfamily. Classic translation factor GTPase family. EF-G/EF-2 subfamily.

Its subcellular location is the cytoplasm. Its function is as follows. Catalyzes the GTP-dependent ribosomal translocation step during translation elongation. During this step, the ribosome changes from the pre-translocational (PRE) to the post-translocational (POST) state as the newly formed A-site-bound peptidyl-tRNA and P-site-bound deacylated tRNA move to the P and E sites, respectively. Catalyzes the coordinated movement of the two tRNA molecules, the mRNA and conformational changes in the ribosome. In Porphyromonas gingivalis (strain ATCC 33277 / DSM 20709 / CIP 103683 / JCM 12257 / NCTC 11834 / 2561), this protein is Elongation factor G.